A 471-amino-acid polypeptide reads, in one-letter code: Abscisic acid 8'-hydroxylase 1 (471 aa).

A helical membrane pass occupies residues 1-21 (MGAFLLFVCVLAPFLLVCAVR). A heme-binding site is contributed by Cys415.

This sequence belongs to the cytochrome P450 family. It depends on heme as a cofactor. In seedlings and expanding leaves.

The protein resides in the membrane. It carries out the reaction 2-cis-(+)-abscisate + reduced [NADPH--hemoprotein reductase] + O2 = (+)-8'-hydroxyabscisate + oxidized [NADPH--hemoprotein reductase] + H2O + H(+). It participates in plant hormone degradation; abscisic acid degradation. Its function is as follows. Involved in the oxidative degradation of abscisic acid. This chain is Abscisic acid 8'-hydroxylase 1 (CYP707A5), found in Oryza sativa subsp. indica (Rice).